We begin with the raw amino-acid sequence, 319 residues long: 7,8-didemethyl-8-hydroxy-5-deazariboflavin synthase (319 aa).

The region spanning 5–236 is the Radical SAM core domain; the sequence is VTYSPAYTIV…SNITLQIPPN (232 aa). Residues Cys-19, Cys-23, and Cys-26 each contribute to the [4Fe-4S] cluster site.

This sequence belongs to the radical SAM superfamily. CofG family. As to quaternary structure, consists of two subunits, CofG and CofH. [4Fe-4S] cluster serves as cofactor.

The catalysed reaction is 5-amino-5-(4-hydroxybenzyl)-6-(D-ribitylimino)-5,6-dihydrouracil + S-adenosyl-L-methionine = 7,8-didemethyl-8-hydroxy-5-deazariboflavin + 5'-deoxyadenosine + L-methionine + NH4(+) + H(+). Its pathway is cofactor biosynthesis; coenzyme F0 biosynthesis. In terms of biological role, catalyzes the radical-mediated synthesis of 7,8-didemethyl-8-hydroxy-5-deazariboflavin from 5-amino-5-(4-hydroxybenzyl)-6-(D-ribitylimino)-5,6-dihydrouracil. The protein is 7,8-didemethyl-8-hydroxy-5-deazariboflavin synthase of Trichodesmium erythraeum (strain IMS101).